A 434-amino-acid polypeptide reads, in one-letter code: Tol-Pal system protein TolB (434 aa).

Positions Met1–Ala28 are cleaved as a signal peptide.

This sequence belongs to the TolB family. The Tol-Pal system is composed of five core proteins: the inner membrane proteins TolA, TolQ and TolR, the periplasmic protein TolB and the outer membrane protein Pal. They form a network linking the inner and outer membranes and the peptidoglycan layer.

Its subcellular location is the periplasm. Its function is as follows. Part of the Tol-Pal system, which plays a role in outer membrane invagination during cell division and is important for maintaining outer membrane integrity. In Nitrosococcus oceani (strain ATCC 19707 / BCRC 17464 / JCM 30415 / NCIMB 11848 / C-107), this protein is Tol-Pal system protein TolB.